A 597-amino-acid polypeptide reads, in one-letter code: tRNA uridine 5-carboxymethylaminomethyl modification enzyme MnmG (597 aa).

Position 10-15 (10-15) interacts with FAD; sequence GGGHAG. Position 267-281 (267-281) interacts with NAD(+); it reads GPRYCPSIEDKVVRF.

It belongs to the MnmG family. Homodimer. Heterotetramer of two MnmE and two MnmG subunits. The cofactor is FAD.

It localises to the cytoplasm. NAD-binding protein involved in the addition of a carboxymethylaminomethyl (cmnm) group at the wobble position (U34) of certain tRNAs, forming tRNA-cmnm(5)s(2)U34. The polypeptide is tRNA uridine 5-carboxymethylaminomethyl modification enzyme MnmG (Thermus thermophilus (strain ATCC 27634 / DSM 579 / HB8)).